Reading from the N-terminus, the 157-residue chain is MAETVEVLVPGGRATAGPPLGPALGPLGINVKAVVDDINKKTAEFNGMSVPVTVMVDDKKNVTLTVGIPPTTALVMKEAGVEKGSGTPNTQAVGNLPLEAVIRIAKMKMESMLSYDLKTAAKEVMGTCVSVGVTVEGKTAKQAIAAVNAGEWDEQLA.

The protein belongs to the universal ribosomal protein uL11 family. In terms of assembly, part of the ribosomal stalk of the 50S ribosomal subunit. Interacts with L10 and the large rRNA to form the base of the stalk. L10 forms an elongated spine to which L12 dimers bind in a sequential fashion forming a multimeric L10(L12)X complex.

Functionally, forms part of the ribosomal stalk which helps the ribosome interact with GTP-bound translation factors. In Methanocorpusculum labreanum (strain ATCC 43576 / DSM 4855 / Z), this protein is Large ribosomal subunit protein uL11.